A 506-amino-acid polypeptide reads, in one-letter code: 2-isopropylmalate synthase (506 aa).

Residues I4–K266 enclose the Pyruvate carboxyltransferase domain. Positions 13, 201, 203, and 237 each coordinate Mn(2+). Residues N390–K506 are regulatory domain.

This sequence belongs to the alpha-IPM synthase/homocitrate synthase family. LeuA type 1 subfamily. In terms of assembly, homodimer. Mn(2+) serves as cofactor.

The protein localises to the cytoplasm. It carries out the reaction 3-methyl-2-oxobutanoate + acetyl-CoA + H2O = (2S)-2-isopropylmalate + CoA + H(+). The protein operates within amino-acid biosynthesis; L-leucine biosynthesis; L-leucine from 3-methyl-2-oxobutanoate: step 1/4. Its function is as follows. Catalyzes the condensation of the acetyl group of acetyl-CoA with 3-methyl-2-oxobutanoate (2-ketoisovalerate) to form 3-carboxy-3-hydroxy-4-methylpentanoate (2-isopropylmalate). In Bacillus thuringiensis (strain Al Hakam), this protein is 2-isopropylmalate synthase.